We begin with the raw amino-acid sequence, 763 residues long: Thyrotropin receptor (763 aa).

The first 21 residues, 1 to 21 (MRQTPLLQLALLLSLPRSLGG), serve as a signal peptide directing secretion. Topologically, residues 22 to 412 (KGCPSPPCEC…EFNPCEDIMG (391 aa)) are extracellular. A disulfide bridge links C31 with C41. N-linked (GlcNAc...) asparagine glycans are attached at residues N77 and N99. 7 LRR repeats span residues 100–124 (LSKMTHIEIRNTRSLTYIDPGALKE), 125–150 (LPLLKFLGIFNTGLGVFPDLTKVYST), 151–174 (DVFFILEITDNPYMTSIPANAFQG), 176–199 (CNETLTLKLYNNGFTSIQGHAFNG), 201–223 (KLDAVYLNKNKYLTAIDQDAFGG), 225–248 (YSGPTLLDVSYTSVTALPSKGLEH), and 264–288 (PLTLSFLHLTRADLSYPSHCCAFKN). 2 N-linked (GlcNAc...) asparagine glycosylation sites follow: N177 and N198. N-linked (GlcNAc...) asparagine glycosylation occurs at N302. At Y384 the chain carries Sulfotyrosine. Residues 413–440 (YKFLRIVVWFVSLLALLGNVFVLIILLT) form a helical membrane-spanning segment. Over 441–449 (SHYKLTVPR) the chain is Cytoplasmic. The helical transmembrane segment at 450 to 472 (FLMCNLAFADFCMGMYLLLIASV) threads the bilayer. The Extracellular portion of the chain corresponds to 473-493 (DLYTHSEYYNHAIDWQTGPGC). A disulfide bond links C493 and C568. Residues 494–516 (NAAGFFTVFASELSVYTLTVITL) form a helical membrane-spanning segment. Over 517–536 (ERWYAITFAMRLDRKMRLRH) the chain is Cytoplasmic. A helical membrane pass occupies residues 537-559 (AYAIMVGGWVCCFLLALLPLVGI). Residues 560-579 (SSYAKVSICLPMDTETPLAL) are Extracellular-facing. A helical transmembrane segment spans residues 580–601 (AYIILVLLLNIVAFIIVCSCYV). At 602 to 624 (KIYITVRNPQYNTGDKDTKIAKR) the chain is on the cytoplasmic side. The chain crosses the membrane as a helical span at residues 625–648 (MAVLIFTDFMCMAPISFYALSALM). Residues 649–659 (NKPLITVTNSK) lie on the Extracellular side of the membrane. The helical transmembrane segment at 660-681 (ILLVLFYPLNSCANPFLYAIFT) threads the bilayer. Residues 682–763 (KTFQRDVFIL…ISKEYNQTVL (82 aa)) are Cytoplasmic-facing. The PDZ-binding signature appears at 761–763 (TVL).

Belongs to the G-protein coupled receptor 1 family. FSH/LSH/TSH subfamily. In terms of assembly, interacts with heterodimer GPHA2:GPHB5; this interaction stimulates cAMP production. Interacts (via the PDZ-binding motif) with SCRIB; regulates TSHR trafficking and function. Glycosylated. In terms of processing, sulfated. Sulfation on Tyr-384 plays a role in thyrotropin receptor binding and activation.

The protein resides in the cell membrane. It is found in the basolateral cell membrane. Receptor for the thyroid-stimulating hormone (TSH) or thyrotropin. Also acts as a receptor for the heterodimeric glycoprotein hormone (GPHA2:GPHB5) or thyrostimulin. The activity of this receptor is mediated by G proteins which activate adenylate cyclase. Plays a central role in controlling thyroid cell metabolism. The sequence is that of Thyrotropin receptor (TSHR) from Felis catus (Cat).